The following is a 1036-amino-acid chain: Chitin synthase 1 (1036 aa).

Positions 1–10 are enriched in pro residues; sequence MDGPPSPTRV. A disordered region spans residues 1–153; the sequence is MDGPPSPTRV…RRPLPPAPLF (153 aa). N38 is a glycosylation site (N-linked (GlcNAc...) asparagine). The segment covering 86–108 has biased composition (low complexity); it reads PSIPLSSSNPRSPIRPSTPSRVS. An N-linked (GlcNAc...) asparagine glycan is attached at N179. The tract at residues 189–229 is disordered; the sequence is RASLKSAHSYTTDSTFTEDDDITNEKLNHYGPAPEGRQDRR. The span at 194-203 shows a compositional bias: polar residues; it reads SAHSYTTDST. Transmembrane regions (helical) follow at residues 659 to 679, 699 to 719, 733 to 753, 776 to 796, 808 to 828, 908 to 928, and 945 to 967; these read FISL…FYFV, IFVI…ILSL, TMVT…YIVI, IFTN…LMSF, SAQY…YAFC, YVVA…SEAY, and WSVA…INIV. The disordered stretch occupies residues 994–1019; sequence AGLGSGFSESGKTGITSGSGMSGMSL. Positions 1001-1019 are enriched in low complexity; it reads SESGKTGITSGSGMSGMSL.

Belongs to the chitin synthase family. Class II subfamily.

Its subcellular location is the cell membrane. It carries out the reaction [(1-&gt;4)-N-acetyl-beta-D-glucosaminyl](n) + UDP-N-acetyl-alpha-D-glucosamine = [(1-&gt;4)-N-acetyl-beta-D-glucosaminyl](n+1) + UDP + H(+). Polymerizes chitin, a structural polymer of the cell wall and septum, by transferring the sugar moiety of UDP-GlcNAc to the non-reducing end of the growing chitin polymer. CHS1 mainly responsible for normal yeast cell reproductive growth. The protein is Chitin synthase 1 of Exophiala dermatitidis (strain ATCC 34100 / CBS 525.76 / NIH/UT8656) (Black yeast).